Reading from the N-terminus, the 366-residue chain is UPF0329 protein ECU01_0130/ECU01_1480/ECU08_0060 (366 aa).

The interval 325-366 is disordered; the sequence is IRKEEKRIRKEEERAKNEEELLRMVESEEGKSGEGEEGCRRG.

Belongs to the UPF0329 family.

The chain is UPF0329 protein ECU01_0130/ECU01_1480/ECU08_0060 from Encephalitozoon cuniculi (strain GB-M1) (Microsporidian parasite).